Consider the following 237-residue polypeptide: Orotidine 5'-phosphate decarboxylase (237 aa).

Residues Asp-11, Lys-34, 61–70 (DLKLHDIPNT), Thr-124, Arg-186, Gln-195, Gly-215, and Arg-216 contribute to the substrate site. The active-site Proton donor is the Lys-63.

Belongs to the OMP decarboxylase family. Type 1 subfamily. As to quaternary structure, homodimer.

The catalysed reaction is orotidine 5'-phosphate + H(+) = UMP + CO2. It participates in pyrimidine metabolism; UMP biosynthesis via de novo pathway; UMP from orotate: step 2/2. Catalyzes the decarboxylation of orotidine 5'-monophosphate (OMP) to uridine 5'-monophosphate (UMP). The sequence is that of Orotidine 5'-phosphate decarboxylase from Lactococcus lactis subsp. cremoris (strain SK11).